The following is a 102-amino-acid chain: NADH-quinone oxidoreductase subunit K (102 aa).

Helical transmembrane passes span 5–25 (LEHY…GIFV), 31–51 (IVIL…MVAF), and 66–86 (FVLT…VVFF).

The protein belongs to the complex I subunit 4L family. As to quaternary structure, NDH-1 is composed of 14 different subunits. Subunits NuoA, H, J, K, L, M, N constitute the membrane sector of the complex.

Its subcellular location is the cellular chromatophore membrane. The catalysed reaction is a quinone + NADH + 5 H(+)(in) = a quinol + NAD(+) + 4 H(+)(out). Its function is as follows. NDH-1 shuttles electrons from NADH, via FMN and iron-sulfur (Fe-S) centers, to quinones in the respiratory chain. The immediate electron acceptor for the enzyme in this species is believed to be ubiquinone. Couples the redox reaction to proton translocation (for every two electrons transferred, four hydrogen ions are translocated across the cytoplasmic membrane), and thus conserves the redox energy in a proton gradient. This Rhodobacter capsulatus (Rhodopseudomonas capsulata) protein is NADH-quinone oxidoreductase subunit K.